The sequence spans 142 residues: Transcription antitermination protein NusB (142 aa).

Belongs to the NusB family.

In terms of biological role, involved in transcription antitermination. Required for transcription of ribosomal RNA (rRNA) genes. Binds specifically to the boxA antiterminator sequence of the ribosomal RNA (rrn) operons. In Latilactobacillus sakei subsp. sakei (strain 23K) (Lactobacillus sakei subsp. sakei), this protein is Transcription antitermination protein NusB.